Consider the following 653-residue polypeptide: UvrABC system protein B (653 aa).

One can recognise a Helicase ATP-binding domain in the interval 25–182; sequence EGIERGVREQ…EKLVELQYKS (158 aa). 38–45 contacts ATP; that stretch reads GVTGSGKT. The short motif at 91–114 is the Beta-hairpin element; it reads YYDYYQPEAYIPHSDVYIEKDALI. One can recognise a Helicase C-terminal domain in the interval 429–591; the sequence is QIADVVNESQ…ITPKSISKSV (163 aa). The UVR domain occupies 616-651; the sequence is EEDIIKLQKEMLLHAENLEFEKALEIRNQINKLSQH.

It belongs to the UvrB family. In terms of assembly, forms a heterotetramer with UvrA during the search for lesions. Interacts with UvrC in an incision complex.

The protein localises to the cytoplasm. Functionally, the UvrABC repair system catalyzes the recognition and processing of DNA lesions. A damage recognition complex composed of 2 UvrA and 2 UvrB subunits scans DNA for abnormalities. Upon binding of the UvrA(2)B(2) complex to a putative damaged site, the DNA wraps around one UvrB monomer. DNA wrap is dependent on ATP binding by UvrB and probably causes local melting of the DNA helix, facilitating insertion of UvrB beta-hairpin between the DNA strands. Then UvrB probes one DNA strand for the presence of a lesion. If a lesion is found the UvrA subunits dissociate and the UvrB-DNA preincision complex is formed. This complex is subsequently bound by UvrC and the second UvrB is released. If no lesion is found, the DNA wraps around the other UvrB subunit that will check the other stand for damage. This is UvrABC system protein B from Anaplasma phagocytophilum (strain HZ).